Here is a 138-residue protein sequence, read N- to C-terminus: Cytochrome b5 (138 aa).

The Cytochrome b5 heme-binding domain maps to 14–90 (GRYYRLEEVQ…SETFIIGELH (77 aa)). Positions 49 and 73 each coordinate heme. Residues 114-136 (SWSNWVIPAIAAIIVALMYRSYM) form a helical membrane-spanning segment.

Belongs to the cytochrome b5 family.

Its subcellular location is the endoplasmic reticulum membrane. It localises to the microsome membrane. Cytochrome b5 is a membrane-bound hemoprotein functioning as an electron carrier for several membrane-bound oxygenases. The chain is Cytochrome b5 (CYB5A) from Gallus gallus (Chicken).